A 263-amino-acid polypeptide reads, in one-letter code: uncharacterized protein (263 aa).

12–19 (KGGVGKTT) lines the ATP pocket.

The protein belongs to the ParA family. MinD subfamily.

This is an uncharacterized protein from Methanocaldococcus jannaschii (strain ATCC 43067 / DSM 2661 / JAL-1 / JCM 10045 / NBRC 100440) (Methanococcus jannaschii).